We begin with the raw amino-acid sequence, 208 residues long: High frequency lysogenization protein HflD homolog (208 aa).

Belongs to the HflD family.

The protein resides in the cytoplasm. Its subcellular location is the cell inner membrane. In Yersinia pestis bv. Antiqua (strain Nepal516), this protein is High frequency lysogenization protein HflD homolog.